The primary structure comprises 135 residues: Putative pre-16S rRNA nuclease (135 aa).

The protein belongs to the YqgF nuclease family.

Its subcellular location is the cytoplasm. Could be a nuclease involved in processing of the 5'-end of pre-16S rRNA. In Clostridium acetobutylicum (strain ATCC 824 / DSM 792 / JCM 1419 / IAM 19013 / LMG 5710 / NBRC 13948 / NRRL B-527 / VKM B-1787 / 2291 / W), this protein is Putative pre-16S rRNA nuclease.